A 556-amino-acid polypeptide reads, in one-letter code: 2-isopropylmalate synthase (556 aa).

Residues Pro33–Asp307 form the Pyruvate carboxyltransferase domain. Positions 42, 246, 248, and 282 each coordinate Mg(2+). The tract at residues Ala439–Ala556 is regulatory domain.

Belongs to the alpha-IPM synthase/homocitrate synthase family. LeuA type 2 subfamily. As to quaternary structure, homodimer. Requires Mg(2+) as cofactor.

Its subcellular location is the cytoplasm. The enzyme catalyses 3-methyl-2-oxobutanoate + acetyl-CoA + H2O = (2S)-2-isopropylmalate + CoA + H(+). The protein operates within amino-acid biosynthesis; L-leucine biosynthesis; L-leucine from 3-methyl-2-oxobutanoate: step 1/4. Functionally, catalyzes the condensation of the acetyl group of acetyl-CoA with 3-methyl-2-oxobutanoate (2-ketoisovalerate) to form 3-carboxy-3-hydroxy-4-methylpentanoate (2-isopropylmalate). The polypeptide is 2-isopropylmalate synthase (Pseudomonas aeruginosa (strain ATCC 15692 / DSM 22644 / CIP 104116 / JCM 14847 / LMG 12228 / 1C / PRS 101 / PAO1)).